The primary structure comprises 1070 residues: Carbamoyl phosphate synthase large chain (1070 aa).

The segment at 1–401 (MPKRDDIKTI…ALLKAVRSLE (401 aa)) is carboxyphosphate synthetic domain. ATP contacts are provided by R129, R169, G175, G176, K208, I210, E215, G241, I242, H243, Q284, and E298. The region spanning 133–327 (RDLMNELGEP…IAKLAAKIAV (195 aa)) is the ATP-grasp 1 domain. 3 residues coordinate Mg(2+): Q284, E298, and N300. 3 residues coordinate Mn(2+): Q284, E298, and N300. The interval 402-546 (IGADHLLLEE…YSTYEEENES (145 aa)) is oligomerization domain. The interval 547–929 (TRSAKESVIV…ALYKGFVASG (383 aa)) is carbamoyl phosphate synthetic domain. Residues 671–861 (EKALEILQIP…MANVATRVIL (191 aa)) enclose the ATP-grasp 2 domain. ATP-binding residues include R707, R746, V748, E752, G777, V778, H779, S780, Q820, and E832. Positions 820, 832, and 834 each coordinate Mg(2+). Q820, E832, and N834 together coordinate Mn(2+). Residues 930 to 1070 (TTMHDYGTVL…SEVKQPKARV (141 aa)) enclose the MGS-like domain. The tract at residues 930-1070 (TTMHDYGTVL…SEVKQPKARV (141 aa)) is allosteric domain.

Belongs to the CarB family. As to quaternary structure, composed of two chains; the small (or glutamine) chain promotes the hydrolysis of glutamine to ammonia, which is used by the large (or ammonia) chain to synthesize carbamoyl phosphate. Tetramer of heterodimers (alpha,beta)4. It depends on Mg(2+) as a cofactor. Mn(2+) serves as cofactor.

It carries out the reaction hydrogencarbonate + L-glutamine + 2 ATP + H2O = carbamoyl phosphate + L-glutamate + 2 ADP + phosphate + 2 H(+). The enzyme catalyses hydrogencarbonate + NH4(+) + 2 ATP = carbamoyl phosphate + 2 ADP + phosphate + 2 H(+). Its pathway is amino-acid biosynthesis; L-arginine biosynthesis; carbamoyl phosphate from bicarbonate: step 1/1. The protein operates within pyrimidine metabolism; UMP biosynthesis via de novo pathway; (S)-dihydroorotate from bicarbonate: step 1/3. Large subunit of the glutamine-dependent carbamoyl phosphate synthetase (CPSase). CPSase catalyzes the formation of carbamoyl phosphate from the ammonia moiety of glutamine, carbonate, and phosphate donated by ATP, constituting the first step of 2 biosynthetic pathways, one leading to arginine and/or urea and the other to pyrimidine nucleotides. The large subunit (synthetase) binds the substrates ammonia (free or transferred from glutamine from the small subunit), hydrogencarbonate and ATP and carries out an ATP-coupled ligase reaction, activating hydrogencarbonate by forming carboxy phosphate which reacts with ammonia to form carbamoyl phosphate. In Listeria monocytogenes serotype 4a (strain HCC23), this protein is Carbamoyl phosphate synthase large chain.